Reading from the N-terminus, the 1050-residue chain is Probable beta-glucosidase E (1050 aa).

The disordered stretch occupies residues Met-1–Asn-87. The Cytoplasmic segment spans residues Met-1–Thr-174. A compositionally biased stretch (basic and acidic residues) spans Phe-11–Lys-20. Low complexity predominate over residues Ser-47 to Ser-56. Residues Arg-78 to Asn-87 are compositionally biased toward polar residues. The chain crosses the membrane as a helical; Signal-anchor for type II membrane protein span at residues Leu-175 to Ala-195. The Extracellular segment spans residues Gln-196 to Tyr-1050. N-linked (GlcNAc...) asparagine glycans are attached at residues Asn-236, Asn-244, Asn-300, and Asn-430. Asp-458 is an active-site residue. N-linked (GlcNAc...) asparagine glycosylation is found at Asn-501, Asn-540, Asn-605, Asn-884, Asn-920, Asn-929, and Asn-993.

This sequence belongs to the glycosyl hydrolase 3 family.

Its subcellular location is the cell membrane. The enzyme catalyses Hydrolysis of terminal, non-reducing beta-D-glucosyl residues with release of beta-D-glucose.. Its pathway is glycan metabolism; cellulose degradation. Beta-glucosidases are one of a number of cellulolytic enzymes involved in the degradation of cellulosic biomass. Catalyzes the last step releasing glucose from the inhibitory cellobiose. In Aspergillus clavatus (strain ATCC 1007 / CBS 513.65 / DSM 816 / NCTC 3887 / NRRL 1 / QM 1276 / 107), this protein is Probable beta-glucosidase E (bglE).